The following is a 261-amino-acid chain: Probable membrane transporter protein PD_1894 (261 aa).

The next 8 membrane-spanning stretches (helical) occupy residues L6–G26, H45–I64, V78–I98, D99–L119, A150–A170, T175–L195, W205–L225, and V239–L259.

It belongs to the 4-toluene sulfonate uptake permease (TSUP) (TC 2.A.102) family.

The protein localises to the cell membrane. The protein is Probable membrane transporter protein PD_1894 of Xylella fastidiosa (strain Temecula1 / ATCC 700964).